The following is a 613-amino-acid chain: Threonine--tRNA ligase (613 aa).

The tract at residues 1–147 is editing domain; it reads MRLLLIHARS…TITPQESAPQ (147 aa). Catalytic stretches follow at residues 199-495 and 200-495; these read PRYI…PALP and RYID…PALP. Cys292, His343, and His464 together coordinate Zn(2+).

The protein belongs to the class-II aminoacyl-tRNA synthetase family. As to quaternary structure, homodimer. Zn(2+) serves as cofactor.

The protein localises to the cytoplasm. The enzyme catalyses tRNA(Thr) + L-threonine + ATP = L-threonyl-tRNA(Thr) + AMP + diphosphate + H(+). Its function is as follows. Catalyzes the attachment of threonine to tRNA(Thr) in a two-step reaction: L-threonine is first activated by ATP to form Thr-AMP and then transferred to the acceptor end of tRNA(Thr). Also edits incorrectly charged L-seryl-tRNA(Thr). The sequence is that of Threonine--tRNA ligase from Caldivirga maquilingensis (strain ATCC 700844 / DSM 13496 / JCM 10307 / IC-167).